Here is an 805-residue protein sequence, read N- to C-terminus: MAVAALALLALLPQALGQHNSSYVDYNVEANPDLFPQCLDTISLSFPDCQSGPLSKNLVCDSTASPYDRAAALVSLFTLEELIANTGNTSPGVPRLGLPPYQVWSEALHGLGRANFTDNGALHAGRPSFPSPILSAAAFNRTLINQIASIISTQGRAFNNAGRFGLDVYSPNINTFRHPVWGRGQETPGEDAYTLTAAYAYEYITGIQGGVNPEHLKLAATAKHFAGYDIENWDNHSRLGNDVNITQQDLAEYYTPQFLVAARDAHVHSFMCSYNAVNGVPSCSNTFFLQTLLRDTFSFVDHGYVSGDCGAVYGVFNPHGYAANEPSAAADAILAGTDIDCGTSYQYHFNESITTGAVARDDIERGFIRLYANLVELGYFDGNSSSSNPYRSLGWPDVQKTDAWNISYEAAVEGIVLLKNDGTLPLASPSEGKNKSIALIGPWANATTQLQGNYYGDAPYLISPVDAFTAAGYTVHYAPGTEISTNSTANFSAALSAARAADTIVFLGGIDNTIEAEAQDRSSIAWPGNQLELISQLAAQKSDDQPLVVYQMGGGQVDSSSLKFNAKVNALLWGGYPGQSGGLALRDILTGARAPAGRLTTTQYPAAYAESFSALDMNLRPNETTQNPGQTYMWYTGEPVYAFGHGLFYTTFNASSAQAAKTKYTFNITDLTSAAHPDTTTVGQRTLFNFTASITNSGQRDSDYTALVYANTSTAGPSPYPNKWLVGFDRLAAVAKEGGTAELNVPVAVDRLARVDEAGNTVLFPGRYEVALNNEREVVVEVELVGEQVVLLKWPEEVQGVAGDE.

Positions 1-17 are cleaved as a signal peptide; the sequence is MAVAALALLALLPQALG. N-linked (GlcNAc...) asparagine glycosylation is found at Asn20, Asn115, Asn140, Asn235, and Asn244. Asp308 is an active-site residue. 12 N-linked (GlcNAc...) asparagine glycosylation sites follow: Asn350, Asn383, Asn405, Asn434, Asn445, Asn486, Asn490, Asn622, Asn653, Asn667, Asn689, and Asn711.

The protein belongs to the glycosyl hydrolase 3 family.

It localises to the secreted. It carries out the reaction Hydrolysis of (1-&gt;4)-beta-D-xylans, to remove successive D-xylose residues from the non-reducing termini.. It functions in the pathway glycan degradation; xylan degradation. Functionally, xylan 1,4-beta-xylosidase involved in the hydrolysis of xylan, a major structural heterogeneous polysaccharide found in plant biomass representing the second most abundant polysaccharide in the biosphere, after cellulose. The chain is Probable exo-1,4-beta-xylosidase xlnD (xlnD) from Aspergillus aculeatus.